A 418-amino-acid chain; its full sequence is Gamma-glutamyl phosphate reductase (418 aa).

Belongs to the gamma-glutamyl phosphate reductase family.

The protein resides in the cytoplasm. The enzyme catalyses L-glutamate 5-semialdehyde + phosphate + NADP(+) = L-glutamyl 5-phosphate + NADPH + H(+). It participates in amino-acid biosynthesis; L-proline biosynthesis; L-glutamate 5-semialdehyde from L-glutamate: step 2/2. Catalyzes the NADPH-dependent reduction of L-glutamate 5-phosphate into L-glutamate 5-semialdehyde and phosphate. The product spontaneously undergoes cyclization to form 1-pyrroline-5-carboxylate. This is Gamma-glutamyl phosphate reductase from Parafrankia sp. (strain EAN1pec).